Here is a 709-residue protein sequence, read N- to C-terminus: Acyl-coenzyme A oxidase 4 (709 aa).

Residues 1-12 are compositionally biased toward polar residues; sequence MTFTKKNVSVSQ. Positions 1–29 are disordered; the sequence is MTFTKKNVSVSQGPDPRSSIQKERDSSKW.

The protein belongs to the acyl-CoA oxidase family. Homooctamer. The cofactor is FAD.

The protein localises to the peroxisome. The catalysed reaction is a 2,3-saturated acyl-CoA + O2 = a (2E)-enoyl-CoA + H2O2. It functions in the pathway lipid metabolism; peroxisomal fatty acid beta-oxidation. The polypeptide is Acyl-coenzyme A oxidase 4 (POX4) (Candida tropicalis (Yeast)).